We begin with the raw amino-acid sequence, 239 residues long: Ubiquinone biosynthesis O-methyltransferase (239 aa).

S-adenosyl-L-methionine is bound by residues R44, G63, D84, and M128.

This sequence belongs to the methyltransferase superfamily. UbiG/COQ3 family.

The catalysed reaction is a 3-demethylubiquinol + S-adenosyl-L-methionine = a ubiquinol + S-adenosyl-L-homocysteine + H(+). It catalyses the reaction a 3-(all-trans-polyprenyl)benzene-1,2-diol + S-adenosyl-L-methionine = a 2-methoxy-6-(all-trans-polyprenyl)phenol + S-adenosyl-L-homocysteine + H(+). The protein operates within cofactor biosynthesis; ubiquinone biosynthesis. In terms of biological role, O-methyltransferase that catalyzes the 2 O-methylation steps in the ubiquinone biosynthetic pathway. This chain is Ubiquinone biosynthesis O-methyltransferase, found in Xanthomonas euvesicatoria pv. vesicatoria (strain 85-10) (Xanthomonas campestris pv. vesicatoria).